Reading from the N-terminus, the 338-residue chain is Homocysteine S-methyltransferase 3 (338 aa).

The Hcy-binding domain occupies 12 to 326 (AVRRWVDAAG…NTIRAIHRTL (315 aa)). C244, C311, and C312 together coordinate Zn(2+).

Monomer. Zn(2+) is required as a cofactor.

It catalyses the reaction S-methyl-L-methionine + L-homocysteine = 2 L-methionine + H(+). Catalyzes methyl transfer from S-methylmethionine (SMM) to adenosyl-L-homocysteine (AdoMet). SMM degradation (by HMT-1, HMT-2, HMT-3 and HMT-4) and biosynthesis (by MMT1) constitute the SMM cycle in plants, which is probably required to achieve short term control of AdoMet level. In Zea mays (Maize), this protein is Homocysteine S-methyltransferase 3 (HMT-3).